Consider the following 741-residue polypeptide: Polyribonucleotide nucleotidyltransferase (741 aa).

Mg(2+) contacts are provided by Asp-489 and Asp-495. The 60-residue stretch at 556–615 (PKIDSIQIPVDKIKVVIGKGGETIDKIIAETGVTIDIDEEGLVQIFSSDQDAIDRAKTII) folds into the KH domain. The 69-residue stretch at 625–693 (GEVYTVPVVR…EKGRVDASIK (69 aa)) folds into the S1 motif domain. Residues 696–741 (LPKPEKNEDGENGEEHRHCCCSHHKPDHHSESMEAPKKSDESETKE) are disordered. Basic and acidic residues-rich tracts occupy residues 698–713 (KPEKNEDGENGEEHRH) and 723–741 (HHSESMEAPKKSDESETKE).

This sequence belongs to the polyribonucleotide nucleotidyltransferase family. It depends on Mg(2+) as a cofactor.

Its subcellular location is the cytoplasm. It carries out the reaction RNA(n+1) + phosphate = RNA(n) + a ribonucleoside 5'-diphosphate. Its function is as follows. Involved in mRNA degradation. Catalyzes the phosphorolysis of single-stranded polyribonucleotides processively in the 3'- to 5'-direction. In Streptococcus thermophilus (strain ATCC BAA-491 / LMD-9), this protein is Polyribonucleotide nucleotidyltransferase.